A 274-amino-acid polypeptide reads, in one-letter code: Bis(5'-nucleosyl)-tetraphosphatase, symmetrical (274 aa).

This sequence belongs to the Ap4A hydrolase family.

The catalysed reaction is P(1),P(4)-bis(5'-adenosyl) tetraphosphate + H2O = 2 ADP + 2 H(+). Functionally, hydrolyzes diadenosine 5',5'''-P1,P4-tetraphosphate to yield ADP. This is Bis(5'-nucleosyl)-tetraphosphatase, symmetrical from Shewanella sp. (strain ANA-3).